The sequence spans 378 residues: 1-acyl-sn-glycerol-3-phosphate acyltransferase delta (378 aa).

The helical transmembrane segment at Phe11–Val31 threads the bilayer. An HXXXXD motif motif is present at residues His96–Asp101. The next 3 membrane-spanning stretches (helical) occupy residues Glu125–Ser145, Thr307–Val327, and Leu338–Val358.

Belongs to the 1-acyl-sn-glycerol-3-phosphate acyltransferase family.

The protein localises to the endoplasmic reticulum membrane. The enzyme catalyses a 1-acyl-sn-glycero-3-phosphate + an acyl-CoA = a 1,2-diacyl-sn-glycero-3-phosphate + CoA. It catalyses the reaction (4Z,7Z,10Z,13Z,16Z,19Z)-docosahexaenoyl-CoA + 1-hexadecanoyl-sn-glycero-3-phosphate = 1-hexadecanoyl-2-(4Z,7Z,10Z,13Z,16Z,19Z-docosahexaenoyl)-sn-glycero-3-phosphate + CoA. It carries out the reaction 1-octadecanoyl-sn-glycero-3-phosphate + (9Z,12Z)-octadecadienoyl-CoA = 1-octadecanoyl-2-(9Z,12Z-octadecadienoyl)-sn-glycero-3-phosphate + CoA. The catalysed reaction is 1-octadecanoyl-sn-glycero-3-phosphate + (4Z,7Z,10Z,13Z,16Z,19Z)-docosahexaenoyl-CoA = 1-octadecanoyl-2-(4Z,7Z,10Z,13Z,16Z,19Z-docosahexaenoyl)-sn-glycero-3-phosphate + CoA. The enzyme catalyses (4Z,7Z,10Z,13Z,16Z,19Z)-docosahexaenoyl-CoA + 1-(9Z-octadecenoyl)-sn-glycero-3-phosphate = 1-(9Z-octadecenoyl)-2-(4Z,7Z,10Z,13Z,16Z,19Z-docosahexaenoyl)-sn-glycero-3-phosphate + CoA. It functions in the pathway phospholipid metabolism; CDP-diacylglycerol biosynthesis; CDP-diacylglycerol from sn-glycerol 3-phosphate: step 2/3. Functionally, converts 1-acyl-sn-glycerol-3-phosphate (lysophosphatidic acid or LPA) into 1,2-diacyl-sn-glycerol-3-phosphate (phosphatidic acid or PA) by incorporating an acyl moiety at the sn-2 position of the glycerol backbone. Exhibits high acyl-CoA specificity for polyunsaturated fatty acyl-CoA, especially docosahexaenoyl-CoA (22:6-CoA, DHA-CoA). The polypeptide is 1-acyl-sn-glycerol-3-phosphate acyltransferase delta (AGPAT4) (Macaca fascicularis (Crab-eating macaque)).